A 122-amino-acid polypeptide reads, in one-letter code: Glycine cleavage system H protein (122 aa).

A Lipoyl-binding domain is found at 19–101 (VVTVGITNYA…EKEGWLWKMT (83 aa)). N6-lipoyllysine is present on lysine 60.

This sequence belongs to the GcvH family. In terms of assembly, the glycine cleavage system is composed of four proteins: P, T, L and H. (R)-lipoate is required as a cofactor.

Its function is as follows. The glycine cleavage system catalyzes the degradation of glycine. The H protein shuttles the methylamine group of glycine from the P protein to the T protein. In Bartonella quintana (strain Toulouse) (Rochalimaea quintana), this protein is Glycine cleavage system H protein.